Here is a 550-residue protein sequence, read N- to C-terminus: MELLLPHPSNSTPLTVLGFLDRAASVYGDCPSILHTTNTVHTWSETHNRCLRIASALTSSSLGINRGQVVSVVGPNVPSVYELQFAVPMSGAILNNINPRLDAHALSVLLRHSESKLVFVDPNSISVVLEAVSFMRQNEKPHLVLLDDDQEDGSLSPSAASDFLDTYQGVMERGDSRFKWIRPQTEWQPMILNYTSGTTSSPKGVVLSHRAIFMLTVSSLLDWHFPNRPVYLWTLPMFHANGWGYTWGTAAVGATNVCTRRVDAPTIYDLIDKHHVTHMCAAPMVLNMLTNYPSRKPLKNPVQVMTAGAPPPAAIISRAETLGFNVGHGYGLTETGGPVVSCAWKAEWDHLDPLERARLKSRQGVRTIGFAEVDVRDPRTGKSVEHDGVSVGEIVLKGGSVMLGYYKDPEGTAACMREDGWFYSGDVGVIHEDGYLEVKDRSKDVIICGGENISSAEVETVLYTNPVVKEAAVVAKPDKMWGETPCAFVSLKYDSNGNGLVTEREIREFCKTRLPKYMVPRKVIFQEELPKTSTGKIQKFLLRQMAKSLP.

The protein belongs to the ATP-dependent AMP-binding enzyme family. In terms of tissue distribution, expressed in leaves, flowers and developing seeds.

Its function is as follows. May act as an acid--thiol ligase that activates carboxylic acids by forming acyl-CoAs. This Arabidopsis thaliana (Mouse-ear cress) protein is Probable acyl-activating enzyme 9 (AEE9).